A 91-amino-acid polypeptide reads, in one-letter code: Mercuric transport protein periplasmic component (91 aa).

The N-terminal stretch at 1–19 is a signal peptide; that stretch reads MKKLFAALALAAVVAPVWA. The region spanning 22 to 88 is the HMA domain; that stretch reads QTVTLSVPGM…ATGDAGYPSS (67 aa). Hg(2+) is bound by residues Cys33 and Cys36.

It belongs to the MerP family. Monomer.

The protein resides in the periplasm. Functionally, involved in mercury resistance. Acts as a mercury scavenger that specifically binds to a mercuric ion in the periplasm and probably passes it to the cytoplasmic mercuric reductase MerA via the mercuric transport protein MerT. This chain is Mercuric transport protein periplasmic component (merP), found in Alcaligenes sp.